A 347-amino-acid polypeptide reads, in one-letter code: NADH-ubiquinone oxidoreductase chain 2 (347 aa).

The next 10 membrane-spanning stretches (helical) occupy residues 3–23, 25–45, 59–79, 93–115, 149–169, 178–198, 200–220, 242–262, 274–294, and 323–343; these read PPIL…VLTS, HWLL…PILM, YFLT…INLL, MAST…HFWV, INTN…GWGG, ILAY…TYNP, VMIL…MLFI, SFIL…GFIP, EMII…YFYM, and MALL…TPMM.

Belongs to the complex I subunit 2 family. As to quaternary structure, core subunit of respiratory chain NADH dehydrogenase (Complex I) which is composed of 45 different subunits. Interacts with TMEM242.

It localises to the mitochondrion inner membrane. The enzyme catalyses a ubiquinone + NADH + 5 H(+)(in) = a ubiquinol + NAD(+) + 4 H(+)(out). Functionally, core subunit of the mitochondrial membrane respiratory chain NADH dehydrogenase (Complex I) which catalyzes electron transfer from NADH through the respiratory chain, using ubiquinone as an electron acceptor. Essential for the catalytic activity and assembly of complex I. The chain is NADH-ubiquinone oxidoreductase chain 2 from Nandinia binotata (African palm civet).